The sequence spans 131 residues: Small ribosomal subunit protein uS8 (131 aa).

The protein belongs to the universal ribosomal protein uS8 family. Part of the 30S ribosomal subunit. Contacts proteins S5 and S12.

One of the primary rRNA binding proteins, it binds directly to 16S rRNA central domain where it helps coordinate assembly of the platform of the 30S subunit. The protein is Small ribosomal subunit protein uS8 of Variovorax paradoxus (strain S110).